A 331-amino-acid polypeptide reads, in one-letter code: Biotin synthase (331 aa).

A Radical SAM core domain is found at 52–277 (PEVEVEGIVS…RTILRYAGGR (226 aa)). [4Fe-4S] cluster contacts are provided by Cys-67, Cys-71, and Cys-74. The [2Fe-2S] cluster site is built by Cys-110, Cys-202, and Arg-272.

It belongs to the radical SAM superfamily. Biotin synthase family. As to quaternary structure, homodimer. It depends on [4Fe-4S] cluster as a cofactor. [2Fe-2S] cluster serves as cofactor.

The catalysed reaction is (4R,5S)-dethiobiotin + (sulfur carrier)-SH + 2 reduced [2Fe-2S]-[ferredoxin] + 2 S-adenosyl-L-methionine = (sulfur carrier)-H + biotin + 2 5'-deoxyadenosine + 2 L-methionine + 2 oxidized [2Fe-2S]-[ferredoxin]. Its pathway is cofactor biosynthesis; biotin biosynthesis; biotin from 7,8-diaminononanoate: step 2/2. Functionally, catalyzes the conversion of dethiobiotin (DTB) to biotin by the insertion of a sulfur atom into dethiobiotin via a radical-based mechanism. This chain is Biotin synthase, found in Salinispora arenicola (strain CNS-205).